The sequence spans 1394 residues: Kinesin-like protein KIF27 (1394 aa).

One can recognise a Kinesin motor domain in the interval 5–341; that stretch reads PIKVAVRIRP…LKYANRARNI (337 aa). 84 to 91 contributes to the ATP binding site; it reads GQTGSGKT. 2 coiled-coil regions span residues 352–418 and 498–554; these read QADR…IEQA and QKDL…ELAK. 2 disordered regions span residues 559–582 and 642–665; these read VPTS…RPHT and FSDN…RSHS. A compositionally biased stretch (basic and acidic residues) spans 571–580; that stretch reads PDARASEKRP. 5 positions are modified to phosphoserine: serine 643, serine 646, serine 672, serine 675, and serine 704. 4 coiled-coil regions span residues 709–891, 921–1078, 1118–1152, and 1186–1226; these read LQKL…GQGE, LDEQ…SIQS, NKVI…HELE, and DQDG…RLKD. Residues 886-916 form a disordered region; that stretch reads KAGQGEGLNPKAEDQDGFNLNRRKSPFRSGD. At serine 999 the chain carries Phosphoserine. Residues 1267–1280 show a composition bias toward basic and acidic residues; the sequence is TENTKLNGSEREVD. 2 disordered regions span residues 1267-1319 and 1325-1344; these read TENT…LQSI and ARPF…PVRS. 2 stretches are compositionally biased toward polar residues: residues 1281–1295 and 1309–1319; these read NSSS…TQQI and IAPSSGQLQSI. A phosphoserine mark is found at serine 1365 and serine 1387.

This sequence belongs to the TRAFAC class myosin-kinesin ATPase superfamily. Kinesin family. KIF27 subfamily. Interacts with STK36.

It localises to the cytoplasm. The protein localises to the cytoskeleton. The protein resides in the cell projection. It is found in the cilium. In terms of biological role, plays an essential role in motile ciliogenesis. This Mus musculus (Mouse) protein is Kinesin-like protein KIF27 (Kif27).